A 291-amino-acid polypeptide reads, in one-letter code: Small ribosomal subunit protein uS2 (291 aa).

A disordered region spans residues 270 to 291 (NINEEANTEFEQALSDADEDKN).

This sequence belongs to the universal ribosomal protein uS2 family.

The polypeptide is Small ribosomal subunit protein uS2 (Rickettsia bellii (strain OSU 85-389)).